Reading from the N-terminus, the 452-residue chain is Probable mannose-6-phosphate isomerase (452 aa).

4 residues coordinate Zn(2+): glutamine 141, histidine 143, glutamate 168, and histidine 295. Residue arginine 314 is part of the active site.

This sequence belongs to the mannose-6-phosphate isomerase type 1 family. The cofactor is Zn(2+).

It localises to the cytoplasm. The catalysed reaction is D-mannose 6-phosphate = D-fructose 6-phosphate. Its pathway is nucleotide-sugar biosynthesis; GDP-alpha-D-mannose biosynthesis; alpha-D-mannose 1-phosphate from D-fructose 6-phosphate: step 1/2. In terms of biological role, involved in the synthesis of the GDP-mannose and dolichol-phosphate-mannose required for a number of critical mannosyl transfer reactions. The polypeptide is Probable mannose-6-phosphate isomerase (mpi) (Dictyostelium discoideum (Social amoeba)).